The following is a 186-amino-acid chain: Ribosome-recycling factor (186 aa).

It belongs to the RRF family.

It is found in the cytoplasm. In terms of biological role, responsible for the release of ribosomes from messenger RNA at the termination of protein biosynthesis. May increase the efficiency of translation by recycling ribosomes from one round of translation to another. This Pediococcus pentosaceus (strain ATCC 25745 / CCUG 21536 / LMG 10740 / 183-1w) protein is Ribosome-recycling factor.